We begin with the raw amino-acid sequence, 463 residues long: 23S rRNA (uracil(1939)-C(5))-methyltransferase RlmD (463 aa).

One can recognise a TRAM domain in the interval 6–76 (KSRKPQQPEY…KRLEEAEMVA (71 aa)). Residues Cys-90, Cys-96, Cys-99, and Cys-178 each coordinate [4Fe-4S] cluster. 6 residues coordinate S-adenosyl-L-methionine: Gln-288, Phe-317, Asn-322, Glu-341, Asp-368, and Asp-389. The Nucleophile role is filled by Cys-415.

This sequence belongs to the class I-like SAM-binding methyltransferase superfamily. RNA M5U methyltransferase family. RlmD subfamily.

The catalysed reaction is uridine(1939) in 23S rRNA + S-adenosyl-L-methionine = 5-methyluridine(1939) in 23S rRNA + S-adenosyl-L-homocysteine + H(+). Its function is as follows. Catalyzes the formation of 5-methyl-uridine at position 1939 (m5U1939) in 23S rRNA. The protein is 23S rRNA (uracil(1939)-C(5))-methyltransferase RlmD of Acinetobacter baumannii (strain SDF).